The chain runs to 269 residues: Thymidylate synthase (269 aa).

Arg-26 contacts dUMP. Position 56 (His-56) interacts with (6R)-5,10-methylene-5,6,7,8-tetrahydrofolate. A dUMP-binding site is contributed by 131-132; the sequence is RR. The active-site Nucleophile is the Cys-151. Residues 171-174, Asn-182, and 212-214 contribute to the dUMP site; these read RSAD and HIY. Asp-174 contacts (6R)-5,10-methylene-5,6,7,8-tetrahydrofolate. (6R)-5,10-methylene-5,6,7,8-tetrahydrofolate is bound at residue Ala-268.

It belongs to the thymidylate synthase family. Bacterial-type ThyA subfamily. In terms of assembly, homodimer.

It is found in the cytoplasm. The catalysed reaction is dUMP + (6R)-5,10-methylene-5,6,7,8-tetrahydrofolate = 7,8-dihydrofolate + dTMP. The protein operates within pyrimidine metabolism; dTTP biosynthesis. In terms of biological role, catalyzes the reductive methylation of 2'-deoxyuridine-5'-monophosphate (dUMP) to 2'-deoxythymidine-5'-monophosphate (dTMP) while utilizing 5,10-methylenetetrahydrofolate (mTHF) as the methyl donor and reductant in the reaction, yielding dihydrofolate (DHF) as a by-product. This enzymatic reaction provides an intracellular de novo source of dTMP, an essential precursor for DNA biosynthesis. The protein is Thymidylate synthase of Leifsonia xyli subsp. xyli (strain CTCB07).